Here is a 312-residue protein sequence, read N- to C-terminus: Pantothenate kinase (312 aa).

97–104 (GSVAVGKS) is a binding site for ATP.

The protein belongs to the prokaryotic pantothenate kinase family.

Its subcellular location is the cytoplasm. The catalysed reaction is (R)-pantothenate + ATP = (R)-4'-phosphopantothenate + ADP + H(+). It participates in cofactor biosynthesis; coenzyme A biosynthesis; CoA from (R)-pantothenate: step 1/5. The polypeptide is Pantothenate kinase (Mycolicibacterium vanbaalenii (strain DSM 7251 / JCM 13017 / BCRC 16820 / KCTC 9966 / NRRL B-24157 / PYR-1) (Mycobacterium vanbaalenii)).